We begin with the raw amino-acid sequence, 229 residues long: Large ribosomal subunit protein uL1 (229 aa).

Belongs to the universal ribosomal protein uL1 family. In terms of assembly, part of the 50S ribosomal subunit.

Functionally, binds directly to 23S rRNA. The L1 stalk is quite mobile in the ribosome, and is involved in E site tRNA release. In terms of biological role, protein L1 is also a translational repressor protein, it controls the translation of the L11 operon by binding to its mRNA. In Magnetococcus marinus (strain ATCC BAA-1437 / JCM 17883 / MC-1), this protein is Large ribosomal subunit protein uL1.